A 358-amino-acid polypeptide reads, in one-letter code: Fructose-bisphosphate aldolase 5, cytosolic (358 aa).

N-acetylserine is present on Ser-2. Arg-39 contributes to the substrate binding site. At Cys-68 the chain carries S-glutathionyl cysteine; transient. Cys-173 is modified (S-glutathionyl cysteine; transient; alternate). S-nitrosocysteine; transient; alternate is present on Cys-173. Catalysis depends on Glu-183, which acts as the Proton acceptor. The active-site Schiff-base intermediate with dihydroxyacetone-P is the Lys-225. Residues 266 to 268 (SGG) and Arg-298 contribute to the substrate site. The residue at position 350 (Ser-350) is a Phosphoserine.

Belongs to the class I fructose-bisphosphate aldolase family. As to quaternary structure, homotetramer. Interacts with TRX3. S-glutathionylated at Cys-68 and Cys-173. In terms of processing, S-nitrosylated at Cys-173. In terms of tissue distribution, expressed in rosette leaves and cauline leaves.

The protein resides in the cytoplasm. Its subcellular location is the cytosol. The catalysed reaction is beta-D-fructose 1,6-bisphosphate = D-glyceraldehyde 3-phosphate + dihydroxyacetone phosphate. Its pathway is carbohydrate degradation; glycolysis; D-glyceraldehyde 3-phosphate and glycerone phosphate from D-glucose: step 4/4. Its function is as follows. Fructose-bisphosphate aldolase that plays a key role in glycolysis and gluconeogenesis. In Arabidopsis thaliana (Mouse-ear cress), this protein is Fructose-bisphosphate aldolase 5, cytosolic.